The sequence spans 306 residues: tRNA dimethylallyltransferase (306 aa).

12–19 (GPTASGKT) is an ATP binding site. 14–19 (TASGKT) provides a ligand contact to substrate. Interaction with substrate tRNA stretches follow at residues 37-40 (DSAL), 161-165 (QRLSR), and 242-247 (RCVGYR).

Belongs to the IPP transferase family. In terms of assembly, monomer. The cofactor is Mg(2+).

The enzyme catalyses adenosine(37) in tRNA + dimethylallyl diphosphate = N(6)-dimethylallyladenosine(37) in tRNA + diphosphate. In terms of biological role, catalyzes the transfer of a dimethylallyl group onto the adenine at position 37 in tRNAs that read codons beginning with uridine, leading to the formation of N6-(dimethylallyl)adenosine (i(6)A). The sequence is that of tRNA dimethylallyltransferase from Shewanella amazonensis (strain ATCC BAA-1098 / SB2B).